The sequence spans 651 residues: Protein EXECUTER 2, chloroplastic (651 aa).

A chloroplast-targeting transit peptide spans 1–69 (MATTQPCLIG…KAPSLSCLRN (69 aa)). Residues 103–138 (ESVVSLLKSQLEDAVEKEDFEEAVKLKQAISEATVD) enclose the UVR domain. Positions 330 to 359 (DATEELVGEGTEETNSSDDEEEVEEEENDS) are disordered.

The protein resides in the plastid. It is found in the chloroplast. Functionally, together with EX1, enables higher plants to perceive singlet oxygen as a stress signal in plastid that activates a genetically determined nuclear stress response program which triggers a programmed cell death (PCD). This transfer of singlet oxygen-induced stress-related signals from the plastid to the nucleus that triggers genetically controlled PCD pathway is unique to photosynthetic eukaryotes and operates under mild stress conditions, impeding photosystem II (PSII) without causing photooxidative damage of the plant. This is Protein EXECUTER 2, chloroplastic from Arabidopsis thaliana (Mouse-ear cress).